The following is a 346-amino-acid chain: Holliday junction branch migration complex subunit RuvB (346 aa).

Residues methionine 1 to tyrosine 188 are large ATPase domain (RuvB-L). ATP-binding positions include leucine 27, arginine 28, glycine 69, lysine 72, threonine 73, threonine 74, glutamate 135–phenylalanine 137, arginine 178, tyrosine 188, and arginine 225. Position 73 (threonine 73) interacts with Mg(2+). The segment at proline 189–aspartate 259 is small ATPAse domain (RuvB-S). A head domain (RuvB-H) region spans residues arginine 262–glycine 346. Positions 298, 317, and 322 each coordinate DNA.

Belongs to the RuvB family. In terms of assembly, homohexamer. Forms an RuvA(8)-RuvB(12)-Holliday junction (HJ) complex. HJ DNA is sandwiched between 2 RuvA tetramers; dsDNA enters through RuvA and exits via RuvB. An RuvB hexamer assembles on each DNA strand where it exits the tetramer. Each RuvB hexamer is contacted by two RuvA subunits (via domain III) on 2 adjacent RuvB subunits; this complex drives branch migration. In the full resolvosome a probable DNA-RuvA(4)-RuvB(12)-RuvC(2) complex forms which resolves the HJ.

The protein localises to the cytoplasm. The catalysed reaction is ATP + H2O = ADP + phosphate + H(+). The RuvA-RuvB-RuvC complex processes Holliday junction (HJ) DNA during genetic recombination and DNA repair, while the RuvA-RuvB complex plays an important role in the rescue of blocked DNA replication forks via replication fork reversal (RFR). RuvA specifically binds to HJ cruciform DNA, conferring on it an open structure. The RuvB hexamer acts as an ATP-dependent pump, pulling dsDNA into and through the RuvAB complex. RuvB forms 2 homohexamers on either side of HJ DNA bound by 1 or 2 RuvA tetramers; 4 subunits per hexamer contact DNA at a time. Coordinated motions by a converter formed by DNA-disengaged RuvB subunits stimulates ATP hydrolysis and nucleotide exchange. Immobilization of the converter enables RuvB to convert the ATP-contained energy into a lever motion, pulling 2 nucleotides of DNA out of the RuvA tetramer per ATP hydrolyzed, thus driving DNA branch migration. The RuvB motors rotate together with the DNA substrate, which together with the progressing nucleotide cycle form the mechanistic basis for DNA recombination by continuous HJ branch migration. Branch migration allows RuvC to scan DNA until it finds its consensus sequence, where it cleaves and resolves cruciform DNA. This Halorhodospira halophila (strain DSM 244 / SL1) (Ectothiorhodospira halophila (strain DSM 244 / SL1)) protein is Holliday junction branch migration complex subunit RuvB.